Reading from the N-terminus, the 142-residue chain is Transcriptional regulator MraZ (142 aa).

2 consecutive SpoVT-AbrB domains span residues 5–51 (ASSL…PRPV) and 77–120 (ASDV…DAAR).

The protein belongs to the MraZ family. In terms of assembly, forms oligomers.

The protein localises to the cytoplasm. The protein resides in the nucleoid. The protein is Transcriptional regulator MraZ of Herminiimonas arsenicoxydans.